A 203-amino-acid chain; its full sequence is MEQAMLKTLALLVLGMHYWCATGFPVYDYDPSSLQEALSASVAKVNSQSLSPYLFRATRSSLKRVNVLDEDTLVMNLEFSVQETTCLRDSGDPSTCAFQRGYSVPTAACRSTVQMSKGQVKDVWAHCRWASSSESNSSEEMMFGDMARSHRRRNDYLLGFLSDESRSEQFRDRSLEIMRRGQPPAHRRFLNLHRRARVNSGFE.

The first 23 residues, 1-23 (MEQAMLKTLALLVLGMHYWCATG), serve as a signal peptide directing secretion. 2 disulfide bridges follow: cysteine 86–cysteine 96 and cysteine 109–cysteine 127. A Phosphoserine modification is found at serine 90. Phosphoserine occurs at positions 137, 138, 162, 165, and 174.

Belongs to the SPP2 family. In terms of processing, phosphorylation sites are present in the extracellular medium.

The protein localises to the secreted. Could coordinate an aspect of bone turnover. The sequence is that of Secreted phosphoprotein 24 (Spp2) from Mus musculus (Mouse).